A 735-amino-acid polypeptide reads, in one-letter code: MRLLRVATCNLNQWAMDFDTNLRNVKESIARAKAAGAAVRVGPELELTGYGCEDHFLEQDTAAHAWECLKDILSGGYTDGILCSIGMPVIFKSVRYNCQVFCLNSKIVMIRPKISLANDGNYREFRWFSAWTFKDALVDFQLPLDISEVTSQDTVPFGYGFIQFLDVSLASETCEELFTANAPRIDLALNGVEVFVNASGSHHQLRKLSLRIDSMRNATLACGGVYMYANQQGCDGGRLYYDGCCCIAVNGDVVAQGSQFSLKDVEVLDALVDLDAVSSYRASVSSFREQASHRTKVPFVKVPYKLCKPFQSGMVPTGPVEVMYHRPEEEIAFGPSCWLWDYLRRSRASGFLLPLSGGADSSSVAAIVGCMCQLVVKDIENGDEQVKADAMRIGQYKDGEFPKDSRELAKRLFYTVYMGTENSSEGTRSRAKMLAEEIGSFHLDVPIDSIVSALLSLFERLTGKRPRYKVDGGSNTENLGLQNIQARIRMVLAFMMASLMPWVHNKSGFYLVLGSSNVDEGLRGYLTKYDCSSADINPIGSVSKQDLRAFLRWAAVHLHYSSLAEVEAAPPTAELEPIRADYNQLDEVDMGMTYEELSIYGRLRKIFRCGPVSMFQNLCHRWCGTLSPSEVADKVKHFFKYYAINRHKMTVLTPSYHAESYSPEDNRFDLRQFLYNARWPYQFRKIDELVQDMDKDGKWVNSTEGELRRRKGVRSAEGGGMGVVAVGSANPSAGS.

One can recognise a CN hydrolase domain in the interval 4 to 274; sequence LRVATCNLNQ…VEVLDALVDL (271 aa). E44 functions as the Proton acceptor; for glutaminase activity in the catalytic mechanism. The active-site For glutaminase activity is the K113. C174 acts as the Nucleophile; for glutaminase activity in catalysis. Positions 324–711 are ligase; sequence YHRPEEEIAF…STEGELRRRK (388 aa). 354-361 contributes to the ATP binding site; it reads PLSGGADS. Residue S356 is part of the active site.

It in the C-terminal section; belongs to the NAD synthetase family.

It catalyses the reaction deamido-NAD(+) + L-glutamine + ATP + H2O = L-glutamate + AMP + diphosphate + NAD(+) + H(+). It functions in the pathway cofactor biosynthesis; NAD(+) biosynthesis; NAD(+) from deamido-NAD(+) (L-Gln route): step 1/1. This is Glutamine-dependent NAD(+) synthetase from Oryza sativa subsp. indica (Rice).